We begin with the raw amino-acid sequence, 375 residues long: MLDLIATRRALHQIPELGMEEFKTHAFLMETIEGLLQDCSFAQVRTWKTGILVYLTGSAPEKTIGWRADIDGLPIVEETGLDFKSLHPDRMHACGHDFHMTIALGLLEKMAEQQPRNNLLFLFQPAEENLAGGMLMYEAGAFGDWLPDEFYGLHVRPDLKVGQMATNRATLFAGTCEVKIRFTGKGGHAAFPYTANDALVAASYFVTQVQSVVSRNVDPIEGAVVTFGSMHAGTTNNVIAETAFLHGTIRALTQNMSLLVQKRVREVAEGIALSFGVDLEIELNPSGYLPVENNPQLADELMTYFDGIDGVEMIDCPPAMTGEDFGYLLNKVPGVMFWLGVDTPYPLHNPRLSPKEEVLPFAVDKLSDFLKMKAN.

Residue Asp69 is part of the active site. The active-site Proton acceptor is the Glu128.

This sequence belongs to the peptidase M20A family. N-acetyldiaminopimelate deacetylase subfamily.

It carries out the reaction N-acetyl-(2S,6S)-2,6-diaminopimelate + H2O = (2S,6S)-2,6-diaminopimelate + acetate. The protein operates within amino-acid biosynthesis; L-lysine biosynthesis via DAP pathway; LL-2,6-diaminopimelate from (S)-tetrahydrodipicolinate (acetylase route): step 3/3. Functionally, catalyzes the conversion of N-acetyl-diaminopimelate to diaminopimelate and acetate. The chain is N-acetyldiaminopimelate deacetylase from Streptococcus suis (strain 05ZYH33).